We begin with the raw amino-acid sequence, 271 residues long: DNA-binding protein HEXBP (271 aa).

2 stretches are compositionally biased toward basic and acidic residues: residues 1 to 12 (MSETEDVKRPRT) and 21 to 42 (CGKE…DERS). The interval 1–42 (MSETEDVKRPRTESSTSCRNCGKEGHYARECPEADSKGDERS) is disordered. CCHC-type zinc fingers lie at residues 16–33 (TSCR…ECPE), 43–60 (TTCF…ECPN), 70–87 (MTCF…DCPN), and 97–114 (FECY…DCPS). A disordered region spans residues 107–136 (HLSRDCPSSQGGSRGGYGQKRGRSGAQGGY). The span at 118–136 (GSRGGYGQKRGRSGAQGGY) shows a compositional bias: gly residues. CCHC-type zinc fingers lie at residues 140–157 (RTCY…DCPN), 168–185 (RTCY…DCPN), 196–213 (RKCY…ECPS), 222–239 (RACY…ECPE), and 253–270 (RTCY…DCPS).

It localises to the nucleus. Functionally, binds to single-stranded DNA located in the 5' hexanucleotide repeat region of the L.major leishmanolysin (GP63) gene. In Leishmania major, this protein is DNA-binding protein HEXBP (HEXBP).